A 534-amino-acid chain; its full sequence is Probable bifunctional tRNA threonylcarbamoyladenosine biosynthesis protein (534 aa).

The segment at 1 to 324 (MICLGIEGTA…YRTDQVEVTW (324 aa)) is kae1. H108, H112, and Y129 together coordinate Fe cation. L-threonylcarbamoyladenylate is bound by residues 129–133 (YTSGG), D161, G174, E178, and N258. A Fe cation-binding site is contributed by D286. The 200-residue stretch at 335 to 534 (LPDNIKEKGA…DEIEKRGRYL (200 aa)) folds into the Protein kinase domain. Residues 340-348 (KEKGAEADI) and K361 contribute to the ATP site. D455 functions as the Proton acceptor; for kinase activity in the catalytic mechanism.

This sequence in the N-terminal section; belongs to the KAE1 / TsaD family. In the C-terminal section; belongs to the protein kinase superfamily. Tyr protein kinase family. BUD32 subfamily. As to quaternary structure, component of the KEOPS complex that consists of Kae1, Bud32, Cgi121 and Pcc1; the whole complex dimerizes. It depends on Fe(2+) as a cofactor.

The protein resides in the cytoplasm. It catalyses the reaction L-seryl-[protein] + ATP = O-phospho-L-seryl-[protein] + ADP + H(+). The catalysed reaction is L-threonyl-[protein] + ATP = O-phospho-L-threonyl-[protein] + ADP + H(+). The enzyme catalyses L-threonylcarbamoyladenylate + adenosine(37) in tRNA = N(6)-L-threonylcarbamoyladenosine(37) in tRNA + AMP + H(+). In terms of biological role, required for the formation of a threonylcarbamoyl group on adenosine at position 37 (t(6)A37) in tRNAs that read codons beginning with adenine. Is a component of the KEOPS complex that is probably involved in the transfer of the threonylcarbamoyl moiety of threonylcarbamoyl-AMP (TC-AMP) to the N6 group of A37. The Kae1 domain likely plays a direct catalytic role in this reaction. The Bud32 domain probably displays kinase activity that regulates Kae1 function. This Methanosphaera stadtmanae (strain ATCC 43021 / DSM 3091 / JCM 11832 / MCB-3) protein is Probable bifunctional tRNA threonylcarbamoyladenosine biosynthesis protein.